Consider the following 320-residue polypeptide: Methionyl-tRNA formyltransferase (320 aa).

112–115 is a binding site for (6S)-5,6,7,8-tetrahydrofolate; that stretch reads SLLP.

It belongs to the Fmt family.

It carries out the reaction L-methionyl-tRNA(fMet) + (6R)-10-formyltetrahydrofolate = N-formyl-L-methionyl-tRNA(fMet) + (6S)-5,6,7,8-tetrahydrofolate + H(+). Its function is as follows. Attaches a formyl group to the free amino group of methionyl-tRNA(fMet). The formyl group appears to play a dual role in the initiator identity of N-formylmethionyl-tRNA by promoting its recognition by IF2 and preventing the misappropriation of this tRNA by the elongation apparatus. This is Methionyl-tRNA formyltransferase from Allorhizobium ampelinum (strain ATCC BAA-846 / DSM 112012 / S4) (Agrobacterium vitis (strain S4)).